The following is a 337-amino-acid chain: Peptide methionine sulfoxide reductase MsrA/MsrB (337 aa).

Residues 28–181 (KDIYLAGGCF…PGGYCHVDLS (154 aa)) are peptide methionine sulfoxide reductase A. C36 is a catalytic residue. Positions 198–321 (KDELKAKLSD…NGASLKFIPL (124 aa)) constitute a MsrB domain. C310 functions as the Nucleophile in the catalytic mechanism.

It in the N-terminal section; belongs to the MsrA Met sulfoxide reductase family. In the C-terminal section; belongs to the MsrB Met sulfoxide reductase family.

The enzyme catalyses L-methionyl-[protein] + [thioredoxin]-disulfide + H2O = L-methionyl-(S)-S-oxide-[protein] + [thioredoxin]-dithiol. The catalysed reaction is [thioredoxin]-disulfide + L-methionine + H2O = L-methionine (S)-S-oxide + [thioredoxin]-dithiol. It carries out the reaction L-methionyl-[protein] + [thioredoxin]-disulfide + H2O = L-methionyl-(R)-S-oxide-[protein] + [thioredoxin]-dithiol. In terms of biological role, has an important function as a repair enzyme for proteins that have been inactivated by oxidation. Catalyzes the reversible oxidation-reduction of methionine sulfoxide in proteins to methionine. This is Peptide methionine sulfoxide reductase MsrA/MsrB (msrAB) from Campylobacter fetus.